The chain runs to 240 residues: uncharacterized protein (240 aa).

Residues 1 to 11 are compositionally biased toward basic residues; the sequence is MGMTPRRKRRG. The disordered stretch occupies residues 1 to 32; it reads MGMTPRRKRRGGAVQITRPTGRPRTPTTQTTK. Positions 17 to 31 are enriched in low complexity; sequence TRPTGRPRTPTTQTT. Helical transmembrane passes span 36 to 56, 93 to 113, 115 to 135, 146 to 166, 172 to 192, and 198 to 218; these read WVVG…VELI, LMAN…AGLS, FVWA…LIGN, IGAS…GLFV, IVIG…AMPV, and GVSW…AYLL.

It to M.leprae ML1171.

It is found in the cell membrane. This is an uncharacterized protein from Mycobacterium tuberculosis (strain CDC 1551 / Oshkosh).